The chain runs to 147 residues: Hemoglobin subunit beta (147 aa).

A Globin domain is found at 3–147 (EWTDSERAII…VVSALGREYH (145 aa)). Heme b-binding residues include H64 and H93.

It belongs to the globin family. In terms of assembly, heterotetramer of two alpha chains and two beta chains. Red blood cells.

Involved in oxygen transport from gills to the various peripheral tissues. In Gadus morhua (Atlantic cod), this protein is Hemoglobin subunit beta (hbb).